Reading from the N-terminus, the 304-residue chain is Undecaprenyl-diphosphatase (304 aa).

Helical transmembrane passes span 5-25 (FLFI…EFVP), 47-67 (GFPE…VVVL), 72-92 (ISSS…LKAS), 111-131 (FGIN…LFHD), 137-157 (LFST…LIVI), 209-231 (ISGL…AMVG), 248-268 (TNLI…LVVI), and 282-302 (IFAI…FTKV).

This sequence belongs to the UppP family.

It is found in the cell membrane. It carries out the reaction di-trans,octa-cis-undecaprenyl diphosphate + H2O = di-trans,octa-cis-undecaprenyl phosphate + phosphate + H(+). Its function is as follows. Catalyzes the dephosphorylation of undecaprenyl diphosphate (UPP). Confers resistance to bacitracin. The protein is Undecaprenyl-diphosphatase of Clostridium perfringens (strain SM101 / Type A).